The following is a 525-amino-acid chain: GMP synthase [glutamine-hydrolyzing] (525 aa).

Positions 11–200 constitute a Glutamine amidotransferase type-1 domain; that stretch reads PVLVVDFGAQ…LTEIAGLEQN (190 aa). The Nucleophile role is filled by C88. Active-site residues include H174 and E176. The region spanning 201–399 is the GMPS ATP-PPase domain; the sequence is WTAANIAEEL…LGLPEEIVNR (199 aa). 229-235 is a binding site for ATP; that stretch reads SGGVDSA.

As to quaternary structure, homodimer.

It carries out the reaction XMP + L-glutamine + ATP + H2O = GMP + L-glutamate + AMP + diphosphate + 2 H(+). The protein operates within purine metabolism; GMP biosynthesis; GMP from XMP (L-Gln route): step 1/1. Functionally, catalyzes the synthesis of GMP from XMP. The protein is GMP synthase [glutamine-hydrolyzing] of Corynebacterium diphtheriae (strain ATCC 700971 / NCTC 13129 / Biotype gravis).